A 250-amino-acid polypeptide reads, in one-letter code: Proteasome subunit alpha type-7-B (250 aa).

Residue Lys-62 forms a Glycyl lysine isopeptide (Lys-Gly) (interchain with G-Cter in ubiquitin) linkage.

Belongs to the peptidase T1A family. Component of the 20S core complex of the 26S proteasome. The 26S proteasome is composed of a core protease (CP), known as the 20S proteasome, capped at one or both ends by the 19S regulatory particle (RP/PA700). The 20S proteasome core is composed of 28 subunits that are arranged in four stacked rings, resulting in a barrel-shaped structure. The two end rings are each formed by seven alpha subunits, and the two central rings are each formed by seven beta subunits. The catalytic chamber with the active sites is on the inside of the barrel.

It localises to the cytoplasm. Its subcellular location is the nucleus. Its function is as follows. The proteasome is a multicatalytic proteinase complex which is characterized by its ability to cleave peptides with Arg, Phe, Tyr, Leu, and Glu adjacent to the leaving group at neutral or slightly basic pH. The proteasome has an ATP-dependent proteolytic activity. The chain is Proteasome subunit alpha type-7-B (PAD2) from Arabidopsis thaliana (Mouse-ear cress).